The following is a 968-amino-acid chain: RNA polymerase-associated protein RapA (968 aa).

The region spanning 164–334 is the Helicase ATP-binding domain; the sequence is DVGRRHAPRV…FARLRLLDPN (171 aa). 177–184 provides a ligand contact to ATP; it reads DEVGLGKT. The short motif at 280–283 is the DEAH box element; that stretch reads DEAH. The 155-residue stretch at 490–644 folds into the Helicase C-terminal domain; it reads RVEWLMGYLT…TCPTGRTVYD (155 aa).

Belongs to the SNF2/RAD54 helicase family. RapA subfamily. As to quaternary structure, interacts with the RNAP. Has a higher affinity for the core RNAP than for the holoenzyme. Its ATPase activity is stimulated by binding to RNAP.

Transcription regulator that activates transcription by stimulating RNA polymerase (RNAP) recycling in case of stress conditions such as supercoiled DNA or high salt concentrations. Probably acts by releasing the RNAP, when it is trapped or immobilized on tightly supercoiled DNA. Does not activate transcription on linear DNA. Probably not involved in DNA repair. The sequence is that of RNA polymerase-associated protein RapA from Klebsiella pneumoniae (strain 342).